The following is a 467-amino-acid chain: Argininosuccinate lyase (467 aa).

This sequence belongs to the lyase 1 family. Argininosuccinate lyase subfamily.

The protein resides in the cytoplasm. It catalyses the reaction 2-(N(omega)-L-arginino)succinate = fumarate + L-arginine. The protein operates within amino-acid biosynthesis; L-arginine biosynthesis; L-arginine from L-ornithine and carbamoyl phosphate: step 3/3. The chain is Argininosuccinate lyase from Anaeromyxobacter sp. (strain K).